A 32-amino-acid chain; its full sequence is C-reactive protein (32 aa).

One can recognise a Pentraxin (PTX) domain in the interval 2–32 (VIKTLVFQSESNNSFVELIPMKPLNLRAFXL).

This sequence belongs to the pentraxin family. As to quaternary structure, homopentamer. Pentraxin (or pentaxin) have a discoid arrangement of 5 non-covalently bound subunits. Post-translationally, glycosylated.

It localises to the secreted. Functionally, displays several functions associated with host defense: it promotes agglutination, bacterial capsular swelling, phagocytosis, and complement fixation through its calcium-dependent binding to phosphorylcholine. This Pleuronectes platessa (European plaice) protein is C-reactive protein.